Here is a 196-residue protein sequence, read N- to C-terminus: UMP-CMP kinase (196 aa).

13–18 (GAGKGT) contributes to the ATP binding site. The segment at 33–63 (SAGDLLREERSRTDSEFGQLIDSYIKEGKIV) is NMP. A ribonucleoside 5'-phosphate contacts are provided by residues R39, 61 to 63 (KIV), and 93 to 96 (GFPR). N100 is a CMP binding site. The interval 133–143 (ERGKSSGRTDD) is LID. ATP is bound at residue R134. Residues R140 and R151 each coordinate a ribonucleoside 5'-phosphate. R179 contacts ATP.

It belongs to the adenylate kinase family. UMP-CMP kinase subfamily. As to quaternary structure, monomer. Requires Mg(2+) as cofactor.

Its subcellular location is the nucleus. It is found in the cytoplasm. It catalyses the reaction CMP + ATP = CDP + ADP. The catalysed reaction is dCMP + ATP = dCDP + ADP. It carries out the reaction UMP + ATP = UDP + ADP. The enzyme catalyses a 2'-deoxyribonucleoside 5'-diphosphate + ATP = a 2'-deoxyribonucleoside 5'-triphosphate + ADP. It catalyses the reaction a ribonucleoside 5'-diphosphate + ATP = a ribonucleoside 5'-triphosphate + ADP. In terms of biological role, catalyzes the phosphorylation of pyrimidine nucleoside monophosphates at the expense of ATP. Plays an important role in de novo pyrimidine nucleotide biosynthesis. Has preference for UMP and CMP as phosphate acceptors. Also displays broad nucleoside diphosphate kinase activity. The protein is UMP-CMP kinase (cmpk) of Danio rerio (Zebrafish).